The chain runs to 139 residues: uncharacterized protein (139 aa).

This is an uncharacterized protein from Dryophytes versicolor (chameleon treefrog).